Reading from the N-terminus, the 221-residue chain is Orotate phosphoribosyltransferase (221 aa).

A 5-phospho-alpha-D-ribose 1-diphosphate-binding site is contributed by Lys26. 34-35 (FF) serves as a coordination point for orotate. 5-phospho-alpha-D-ribose 1-diphosphate contacts are provided by residues 72–73 (YK), Arg98, Lys99, Lys102, His104, and 123–131 (DDVISAGTS). Ser127 and Arg155 together coordinate orotate.

The protein belongs to the purine/pyrimidine phosphoribosyltransferase family. PyrE subfamily. Homodimer. Requires Mg(2+) as cofactor.

The enzyme catalyses orotidine 5'-phosphate + diphosphate = orotate + 5-phospho-alpha-D-ribose 1-diphosphate. Its pathway is pyrimidine metabolism; UMP biosynthesis via de novo pathway; UMP from orotate: step 1/2. Catalyzes the transfer of a ribosyl phosphate group from 5-phosphoribose 1-diphosphate to orotate, leading to the formation of orotidine monophosphate (OMP). This Herminiimonas arsenicoxydans protein is Orotate phosphoribosyltransferase.